The following is a 239-amino-acid chain: MQQDLFGSDSICPISSDDVLKATDPNFESWRERIVQDALKIVEQIPKWKHLGNHDGVALYEKAPAYTGHTWYGRVSKHTRSLKTFKKGLLYEHIKKEADYDPLVFSAHQLETIIEDEIEIWMYKYKTPWFFRNRVYRQLVVSVMLDPDSFIVLQTPVTYPGSSSGGGNGVVALYDSVDFVSKKLDGDGKEEGVLWICAVRNDYGSMFSGLFSDTTFTKSLVRQVKLYNEWLNRTYPRKG.

It is found in the endoplasmic reticulum. The protein resides in the golgi apparatus. This is an uncharacterized protein from Schizosaccharomyces pombe (strain 972 / ATCC 24843) (Fission yeast).